A 148-amino-acid polypeptide reads, in one-letter code: Large ribosomal subunit protein bL9 (148 aa).

This sequence belongs to the bacterial ribosomal protein bL9 family.

Its function is as follows. Binds to the 23S rRNA. The protein is Large ribosomal subunit protein bL9 of Macrococcus caseolyticus (strain JCSC5402) (Macrococcoides caseolyticum).